The primary structure comprises 498 residues: MGKYVVALDQGTTSSRAIIFDKEQNIVGVSQKEFTQIYPHEGWVEHNPLEIWSSQYGVLQEVLAKTNITADEISAIGITNQRETTIVWDKNTGEPVYNAIVWQCRRTAGIVDELKKDDEFAEYVKANTGLLLDAYFSGTKIKWILDNVEGAREKAEKGDLLFGTVDTWLVWKLTNGKVHVTDYTNASRTMLYNIKELRWDEKIINKLGIPTSMLPEVKNSSEVYGHTNLGGVGGVRVPISGMAGDQQCALFGQTCFEKGSAKNTYGTGCFLLMNTGEDMVLSKNGLVTTIAVGINDKIEYALEGSVFVGGAVIQWIRDELQFIHDAADSEYFAKKVEDNGGVYVVPAFVGLGAPYWDMYARGAIFGLTRGANRNHIIRAALESIAYQTNDLLTAMAEDAGCKLASLRVDGGASRNDLLMQFQADISNTQVLRPIITETTALGAAYLAGLAVGFWESKEEIATKWAVSKSYGPTFESAKREKLNKGWKNAVSRVKGWAE.

T12 provides a ligand contact to ADP. ATP is bound by residues T12, T13, and S14. T12 contributes to the sn-glycerol 3-phosphate binding site. ADP is bound at residue R16. The sn-glycerol 3-phosphate site is built by R82, E83, Y135, and D245. Residues R82, E83, Y135, D245, and Q246 each contribute to the glycerol site. T267 and G310 together coordinate ADP. ATP-binding residues include T267, G310, Q314, and G411. Residues G411 and N415 each contribute to the ADP site.

It belongs to the FGGY kinase family. As to quaternary structure, homotetramer and homodimer (in equilibrium).

The enzyme catalyses glycerol + ATP = sn-glycerol 3-phosphate + ADP + H(+). It functions in the pathway polyol metabolism; glycerol degradation via glycerol kinase pathway; sn-glycerol 3-phosphate from glycerol: step 1/1. Activated by phosphorylation and inhibited by fructose 1,6-bisphosphate (FBP). Functionally, key enzyme in the regulation of glycerol uptake and metabolism. Catalyzes the phosphorylation of glycerol to yield sn-glycerol 3-phosphate. This is Glycerol kinase from Clostridium botulinum (strain Alaska E43 / Type E3).